We begin with the raw amino-acid sequence, 279 residues long: Protein gustavus (279 aa).

The region spanning 36–233 is the B30.2/SPRY domain; it reads PARIDILLDM…ITMRYIGGLD (198 aa). The SOCS box domain occupies 234 to 279; that stretch reads PEPLPLMDLCRRTIRQKIGRTNLEEHIQQLQLPLSMKTYLLYKNRR. The segment at 236–279 is involved in binding to the Elongin BC complex; the sequence is PLPLMDLCRRTIRQKIGRTNLEEHIQQLQLPLSMKTYLLYKNRR.

This sequence belongs to the SPSB family. As to quaternary structure, interacts (via B30.2/SPRY domain) with vas; this interaction may be necessary for the transport of vas to the posterior pole of the oocyte. Interacts with Cul-5. May associate with the Elongin BC complex composed of Elongin-B and Elongin-C. As to expression, expressed in ovaries, primarily in nurse cells and oocytes (at protein level).

The protein localises to the cytoplasm. Its subcellular location is the nucleus. In terms of biological role, involved in the localization of vas to the posterior pole of the oocyte. Required maternally in the germ line for efficient primordial germ cell formation. This chain is Protein gustavus (gus), found in Drosophila melanogaster (Fruit fly).